Reading from the N-terminus, the 420-residue chain is Peroxisomal biogenesis factor 3 (420 aa).

The Peroxisomal portion of the chain corresponds to 1 to 16; that stretch reads MPIFSSLNSFLRRHKK. A helical transmembrane segment spans residues 17-37; sequence KLIVTATLTFSAYFLVNQFII. Residues 38 to 420 are Cytoplasmic-facing; it reads KKLKNFQNSL…FSASIYSNFE (383 aa).

The protein belongs to the peroxin-3 family.

The protein localises to the peroxisome membrane. In terms of biological role, involved in peroxisome biosynthesis. This is Peroxisomal biogenesis factor 3 (PEX3) from Debaryomyces hansenii (strain ATCC 36239 / CBS 767 / BCRC 21394 / JCM 1990 / NBRC 0083 / IGC 2968) (Yeast).